We begin with the raw amino-acid sequence, 790 residues long: Cadherin-6 (790 aa).

Residues 1–18 (MRTYRYFLLLFWVGQPYP) form the signal peptide. The propeptide occupies 19 to 53 (TFSNPLSKRTSGFPAKRKALELSANSRNELSRSKR). Cadherin domains follow at residues 54–159 (SWMW…EPIF), 160–268 (TKDV…PPRF), 269–383 (PQST…PPVF), 384–486 (SKLA…DNAP), and 487–608 (EFAE…LIHP). The Extracellular segment spans residues 54–615 (SWMWNQFFLL…IHPTGLSTGA (562 aa)). An N-linked (GlcNAc...) asparagine glycan is attached at asparagine 255. Residues 260 to 291 (DVNDNPPRFPQSTYQFKTPESSPPGTPIGRIK) form a disordered region. Residues 269 to 279 (PQSTYQFKTPE) are compositionally biased toward polar residues. N-linked (GlcNAc...) asparagine glycosylation is found at asparagine 399, asparagine 437, asparagine 455, and asparagine 536. The helical transmembrane segment at 616-636 (LVAILLCIVILLVTVVLFAAL) threads the bilayer. At 637–790 (RRQRKKEPLI…YGGMDSDKDS (154 aa)) the chain is on the cytoplasmic side. Serine 786 and serine 790 each carry phosphoserine.

The protein resides in the cell membrane. In terms of biological role, cadherins are calcium-dependent cell adhesion proteins. They preferentially interact with themselves in a homophilic manner in connecting cells; cadherins may thus contribute to the sorting of heterogeneous cell types. In Mus musculus (Mouse), this protein is Cadherin-6 (Cdh6).